Here is a 246-residue protein sequence, read N- to C-terminus: Probable transcriptional regulatory protein AHA_1522 (246 aa).

This sequence belongs to the TACO1 family.

It is found in the cytoplasm. The polypeptide is Probable transcriptional regulatory protein AHA_1522 (Aeromonas hydrophila subsp. hydrophila (strain ATCC 7966 / DSM 30187 / BCRC 13018 / CCUG 14551 / JCM 1027 / KCTC 2358 / NCIMB 9240 / NCTC 8049)).